A 392-amino-acid chain; its full sequence is Tryptophan synthase beta chain (392 aa).

At lysine 84 the chain carries N6-(pyridoxal phosphate)lysine.

This sequence belongs to the TrpB family. As to quaternary structure, tetramer of two alpha and two beta chains. Pyridoxal 5'-phosphate is required as a cofactor.

It carries out the reaction (1S,2R)-1-C-(indol-3-yl)glycerol 3-phosphate + L-serine = D-glyceraldehyde 3-phosphate + L-tryptophan + H2O. Its pathway is amino-acid biosynthesis; L-tryptophan biosynthesis; L-tryptophan from chorismate: step 5/5. In terms of biological role, the beta subunit is responsible for the synthesis of L-tryptophan from indole and L-serine. This chain is Tryptophan synthase beta chain, found in Campylobacter jejuni subsp. doylei (strain ATCC BAA-1458 / RM4099 / 269.97).